We begin with the raw amino-acid sequence, 228 residues long: Fluoride-specific ion channel FluC (228 aa).

Transmembrane regions (helical) follow at residues 3 to 23 (LSLF…FWVS), 37 to 57 (GTLF…VMMI), 72 to 92 (VGFL…LALF), 101 to 121 (ALNV…GAVL), 141 to 161 (IFGA…LAFA), 172 to 192 (LVLV…LVVT), and 202 to 222 (LWGA…LGLV). The Na(+) site is built by glycine 76 and threonine 79.

Belongs to the fluoride channel Fluc/FEX (TC 1.A.43) family.

It is found in the cell inner membrane. The enzyme catalyses fluoride(in) = fluoride(out). Its activity is regulated as follows. Na(+) is not transported, but it plays an essential structural role and its presence is essential for fluoride channel function. Its function is as follows. Fluoride-specific ion channel. Important for reducing fluoride concentration in the cell, thus reducing its toxicity. The chain is Fluoride-specific ion channel FluC from Methylococcus capsulatus (strain ATCC 33009 / NCIMB 11132 / Bath).